The primary structure comprises 438 residues: Serine hydroxymethyltransferase (438 aa).

(6S)-5,6,7,8-tetrahydrofolate-binding positions include Leu-133 and 137–139 (GHL). Lys-242 carries the N6-(pyridoxal phosphate)lysine modification.

The protein belongs to the SHMT family. As to quaternary structure, homodimer. Pyridoxal 5'-phosphate serves as cofactor.

Its subcellular location is the cytoplasm. The enzyme catalyses (6R)-5,10-methylene-5,6,7,8-tetrahydrofolate + glycine + H2O = (6S)-5,6,7,8-tetrahydrofolate + L-serine. The protein operates within one-carbon metabolism; tetrahydrofolate interconversion. It participates in amino-acid biosynthesis; glycine biosynthesis; glycine from L-serine: step 1/1. Catalyzes the reversible interconversion of serine and glycine with tetrahydrofolate (THF) serving as the one-carbon carrier. This reaction serves as the major source of one-carbon groups required for the biosynthesis of purines, thymidylate, methionine, and other important biomolecules. Also exhibits THF-independent aldolase activity toward beta-hydroxyamino acids, producing glycine and aldehydes, via a retro-aldol mechanism. The polypeptide is Serine hydroxymethyltransferase (Brucella abortus (strain S19)).